The chain runs to 191 residues: Calcium and integrin-binding protein 1 (191 aa).

The N-myristoyl glycine moiety is linked to residue glycine 2. 2 consecutive EF-hand domains span residues 103-138 (TPDI…LTGE) and 148-183 (EMKQ…SPDF). Ca(2+) contacts are provided by aspartate 116, aspartate 118, aspartate 120, threonine 122, aspartate 127, aspartate 161, aspartate 163, aspartate 165, threonine 167, and glutamate 172.

As to quaternary structure, monomer. Interacts with the heterodimeric integrin alpha-IIb/beta3 (ITGA2B-ITGB3). Interacts with ITGA2B (via cytoplasmic domain); the interaction is direct and calcium-dependent. Interacts with the protein kinases PLK2/SNK and PRKDC (via the region immediately upstream of the kinase domain). Interacts with PLK3; the interaction inhibits PLK3 kinase activity. Interacts with PSEN2. Interacts (via C-terminus) with F8. Interacts with NBR1 (via C-terminus). Interacts with FEZ1 (via C-terminus). Interacts with UBR5 (via C-terminus); the interaction is sensitive to DNA damage, and may target CIB1 for ubiquitin-mediated degradation. Interacts with IFI6; the interaction is direct. Interacts with BCL2. Interacts with ITPR3; the interaction occurs in a calcium dependent manner. Interacts with PTK2/FAK1. Interacts with MAP3K5; the interaction inhibits MAP3K5 activation by phosphorylation, and its subsequent interaction with TRAF2. Interacts (via C-terminal region) with STMN2 (via the N-terminal region); the interaction is direct, occurs in a calcium-dependent manner and attenuates the STMN2-induced neurite outgrowth inhibition. Interacts with SPHK1, the interaction occurs in a calcium-dependent manner. Interacts with ITGA2B (via C-terminal cytoplasmic tail); the interaction occurs upon platelet aggregation and is stabilized/increased in a calcium and magnesium-dependent manner. Interacts with PAK1 (via N-terminal region); the interaction is direct and occurs in a calcium-dependent manner. Interacts with RAC3 (via C-terminal region); the interaction induces their association with the cytoskeleton upon alpha-IIb/beta3 integrin-mediated adhesion. Interacts with ITGA5 and ITGAV. Interacts with MYO1C. Interacts with ITGA2B (via C-terminal cytoplasmic tail region). Interacts (via C-terminal region) with PPP3R1; the interaction increases upon cardiomyocytes hypertrophy. Interacts with CACNA1C; the interaction increases upon cardiomyocytes hypertrophy. Interacts with TAS1R2 (via C-terminus); this interaction is independent of the myristoylation state of CIB1. Interacts and forms a complex with TMC6 and TMC8; the interaction stabilizes each component of the complex.

Its subcellular location is the membrane. The protein localises to the cell membrane. It is found in the sarcolemma. The protein resides in the apical cell membrane. It localises to the cell projection. Its subcellular location is the ruffle membrane. The protein localises to the filopodium tip. It is found in the growth cone. The protein resides in the lamellipodium. It localises to the cytoplasm. Its subcellular location is the cytoskeleton. The protein localises to the microtubule organizing center. It is found in the centrosome. The protein resides in the perinuclear region. It localises to the nucleus. Its subcellular location is the neuron projection. The protein localises to the perikaryon. In terms of biological role, calcium-binding protein that plays a role in the regulation of numerous cellular processes, such as cell differentiation, cell division, cell proliferation, cell migration, thrombosis, angiogenesis, cardiac hypertrophy and apoptosis. Involved in bone marrow megakaryocyte differentiation by negatively regulating thrombopoietin-mediated signaling pathway. Participates in the endomitotic cell cycle of megakaryocyte, a form of mitosis in which both karyokinesis and cytokinesis are interrupted. Plays a role in integrin signaling by negatively regulating alpha-IIb/beta3 activation in thrombin-stimulated megakaryocytes preventing platelet aggregation. Up-regulates PTK2/FAK1 activity, and is also needed for the recruitment of PTK2/FAK1 to focal adhesions; it thus appears to play an important role in focal adhesion formation. Positively regulates cell migration on fibronectin in a CDC42-dependent manner, the effect being negatively regulated by PAK1. Functions as a negative regulator of stress activated MAP kinase (MAPK) signaling pathways. Down-regulates inositol 1,4,5-trisphosphate receptor-dependent calcium signaling. Involved in sphingosine kinase SPHK1 translocation to the plasma membrane in a N-myristoylation-dependent manner preventing TNF-alpha-induced apoptosis. Regulates serine/threonine-protein kinase PLK3 activity for proper completion of cell division progression. Plays a role in microtubule (MT) dynamics during neuronal development; disrupts the MT depolymerization activity of STMN2 attenuating NGF-induced neurite outgrowth and the MT reorganization at the edge of lamellipodia. Promotes cardiomyocyte hypertrophy via activation of the calcineurin/NFAT signaling pathway. Stimulates calcineurin PPP3R1 activity by mediating its anchoring to the sarcolemma. In ischemia-induced (pathological or adaptive) angiogenesis, stimulates endothelial cell proliferation, migration and microvessel formation by activating the PAK1 and ERK1/ERK2 signaling pathway. Also promotes cancer cell survival and proliferation. May regulate cell cycle and differentiation of spermatogenic germ cells, and/or differentiation of supporting Sertoli cells. Forms a complex with TMC6/EVER1 and TMC8/EVER2 in lymphocytes and keratynocytes where CIB1 stabilizes TMC6 and TMC8 levels and reciprocally. This chain is Calcium and integrin-binding protein 1 (CIB1), found in Bos taurus (Bovine).